A 662-amino-acid polypeptide reads, in one-letter code: 3',5'-cyclic-AMP phosphodiesterase, isoform F (662 aa).

Disordered regions lie at residues 79 to 108 (VPAS…LSQG) and 207 to 245 (SAGQ…RLPT). Residues 80-98 (PASNKSRRPNQSSSASRSG) are compositionally biased toward polar residues. A PDEase domain is found at 248 to 577 (VETPRENELG…DYYQSMIPPS (330 aa)). H324 serves as the catalytic Proton donor. 324 to 328 (HNSLH) provides a ligand contact to 3',5'-cyclic AMP. A divalent metal cation-binding residues include H328, H364, D365, and D482. D365, D482, and Q533 together coordinate 3',5'-cyclic AMP. The segment covering 599–616 (EESDQENLAELEEGDESG) has biased composition (acidic residues). The tract at residues 599–662 (EESDQENLAE…CQNQPQHGGM (64 aa)) is disordered. Over residues 617–634 (GESTTTGTTGTTAASALS) the composition is skewed to low complexity. Residues 635-646 (GAGGGGGGGGGM) show a composition bias toward gly residues. Positions 652-662 (GCQNQPQHGGM) are enriched in polar residues.

This sequence belongs to the cyclic nucleotide phosphodiesterase family. PDE4 subfamily. Monomer. It depends on a divalent metal cation as a cofactor.

It catalyses the reaction 3',5'-cyclic AMP + H2O = AMP + H(+). It participates in purine metabolism; 3',5'-cyclic AMP degradation; AMP from 3',5'-cyclic AMP: step 1/1. In terms of biological role, hydrolyzes the second messenger cAMP, which is a key regulator of many important physiological processes. Vital for female fertility. Required for learning/memory. The sequence is that of 3',5'-cyclic-AMP phosphodiesterase, isoform F from Drosophila melanogaster (Fruit fly).